Reading from the N-terminus, the 740-residue chain is ATP-dependent RNA helicase DDX1 (740 aa).

The segment at 1–295 (MAAFSEMGVM…APKALIVEPS (295 aa)) is necessary for interaction with HNRNPK. The tract at residues 1 to 448 (MAAFSEMGVM…DTVHHVVVPV (448 aa)) is interaction with dsRNA. Positions 1–525 (MAAFSEMGVM…KIDCDNLEQY (525 aa)) are necessary for interaction with RELA. One can recognise a Helicase ATP-binding domain in the interval 2 to 428 (AAFSEMGVMP…SEKIMHFPTW (427 aa)). An ATP-binding site is contributed by 46-53 (AETGSGKT). In terms of domain architecture, B30.2/SPRY spans 70-247 (DQQEGKKGKT…LKFNFGEEEF (178 aa)). N6-acetyllysine occurs at positions 239 and 268. Residue K281 is modified to N6-acetyllysine; alternate. A Glycyl lysine isopeptide (Lys-Gly) (interchain with G-Cter in SUMO2); alternate cross-link involves residue K281. Positions 370–373 (DEAD) match the DEAD box motif. S481 carries the post-translational modification Phosphoserine. Residues 493 to 681 (KGEYAVRAIK…QVEPDIKVPV (189 aa)) enclose the Helicase C-terminal domain. Residues 525–740 (YFMQQGGGPD…YLPNQLFRTF (216 aa)) are necessary for interaction with HNRNPK.

The protein belongs to the DEAD box helicase family. DDX1 subfamily. Found in a multi-helicase-TICAM1 complex at least composed of DHX36, DDX1, DDX21 and TICAM1; this complex exists in resting cells with or without poly(I:C) RNA ligand stimulation. Interacts with DHX36. Interacts (via B30.2/SPRY domain) with DDX21 (via N-terminus); this interaction serves as bridges to TICAM1. Interacts with FAM98A (via N- and C-terminus). Interacts with MBNL1. Interacts with CSTF2. Interacts with HNRNPK. Interacts with ATM. Interacts with RELA (via C-terminus). Component of the tRNA-splicing ligase complex. Interacts with PHF5A (via C-terminus). Interacts with PQBP1. Interacts with ERCC6. Post-translationally, phosphorylated by ATM kinase; phosphorylation is increased in response to ionizing radiation (IR). Testis-specific. Expressed in the germ line stem cells, spermatogonia and spermatocytes of the testis. Also expressed in the seminoma and nonseminoma types of testicular germ cell tumors (TGCTs) (at protein level).

The protein resides in the nucleus. Its subcellular location is the cytoplasm. The protein localises to the cytosol. It is found in the cytoplasmic granule. It localises to the mitochondrion. The catalysed reaction is ATP + H2O = ADP + phosphate + H(+). In terms of biological role, acts as an ATP-dependent RNA helicase, able to unwind both RNA-RNA and RNA-DNA duplexes. Possesses 5' single-stranded RNA overhang nuclease activity. Possesses ATPase activity on various RNA, but not DNA polynucleotides. May play a role in RNA clearance at DNA double-strand breaks (DSBs), thereby facilitating the template-guided repair of transcriptionally active regions of the genome. Together with RELA, acts as a coactivator to enhance NF-kappa-B-mediated transcriptional activation. Acts as a positive transcriptional regulator of cyclin CCND2 expression. Binds to the cyclin CCND2 promoter region. Associates with chromatin at the NF-kappa-B promoter region via association with RELA. Binds to poly(A) RNA. May be involved in 3'-end cleavage and polyadenylation of pre-mRNAs. Component of the tRNA-splicing ligase complex required to facilitate the enzymatic turnover of catalytic subunit RTCB: together with archease (ZBTB8OS), acts by facilitating the guanylylation of RTCB, a key intermediate step in tRNA ligation. Component of a multi-helicase-TICAM1 complex that acts as a cytoplasmic sensor of viral double-stranded RNA (dsRNA) and plays a role in the activation of a cascade of antiviral responses including the induction of pro-inflammatory cytokines via the adapter molecule TICAM1. Specifically binds (via helicase ATP-binding domain) on both short and long poly(I:C) dsRNA. The chain is ATP-dependent RNA helicase DDX1 (Ddx1) from Mus musculus (Mouse).